The primary structure comprises 109 residues: Putative small proline-rich protein 2J (109 aa).

A run of 5 repeats spans residues 21–29, 30–38, 39–47, 48–56, and 57–65. The tract at residues 21-65 is 5 X 9 AA approximate tandem repeats; the sequence is RSAQSPVLCQSAPSLVLLQSAQSPIHCQSALSHAHLSHASRNALL. The disordered stretch occupies residues 76-109; sequence AHPRANKGFSSLQNQKKRTESILHKSIATPPSSI.

This sequence belongs to the cornifin (SPRR) family. Not expressed in uterus.

The protein resides in the cytoplasm. Its function is as follows. Cross-linked envelope protein of keratinocytes. It is a keratinocyte protein that first appears in the cell cytosol, but ultimately becomes cross-linked to membrane proteins by transglutaminase. All that results in the formation of an insoluble envelope beneath the plasma membrane. This chain is Putative small proline-rich protein 2J (Sprr2j), found in Mus musculus (Mouse).